Consider the following 602-residue polypeptide: Solute carrier organic anion transporter family member 1C1 (602 aa).

Residues 1–43 (MDTSSKENIQLFCKTSVQPVGRPSFKTEYPSSEEKQPCCGELK) are Cytoplasmic-facing. The helical transmembrane segment at 44–63 (VFLGALSFVYFAKALAEGYL) threads the bilayer. Residues 64–82 (KSTITQIERRFDIPSSLVG) lie on the Extracellular side of the membrane. Residues 83–103 (VIDGSFEIGNLLVITFVSYFG) form a helical membrane-spanning segment. Residues 104–109 (AKLHRP) lie on the Cytoplasmic side of the membrane. Residues 110–134 (KIIGAGCLIMGVGTLLIAMPQFFME) form a helical membrane-spanning segment. The Extracellular portion of the chain corresponds to 135–139 (QYKYE). The chain crosses the membrane as a helical span at residues 140-156 (IYSPSSNSTLSISPCLL). Topologically, residues 157–238 (ESSSQLPVSV…ARDFLPSLKY (82 aa)) are cytoplasmic. The disordered stretch occupies residues 190-216 (PRSQSREDSNSSSEKSKFIRDDHTDYQ). Residues 193–214 (QSREDSNSSSEKSKFIRDDHTD) are compositionally biased toward basic and acidic residues. A helical transmembrane segment spans residues 239-260 (LFGNPVYFLYLCTSTVQFNSLF). The Extracellular segment spans residues 261-280 (GMVTYKPKYIEQQYGQSSSR). Residues 281–304 (ANFVIGLINIPAVALGIFSGGIAM) traverse the membrane as a helical segment. Residues 305–308 (KKFR) lie on the Cytoplasmic side of the membrane. The chain crosses the membrane as a helical span at residues 309 to 332 (ISVCGAAKLYLGSSVFGYLLFLSL). At 333–444 (FALGCENSDV…NGCPQMFLYF (112 aa)) the chain is on the extracellular side. Positions 360–415 (RALFSDCNPRCKCSETKWEPMCGENGITYVSACPAGCQTSNRSGKNIIFYNCTCVG) constitute a Kazal-like domain. Disulfide bonds link Cys-366/Cys-396, Cys-372/Cys-392, and Cys-381/Cys-413. Residues Asn-400, Asn-410, and Asn-423 are each glycosylated (N-linked (GlcNAc...) asparagine). Residues 445–467 (LVISVITSYTLSLGGIPGYILLL) form a helical membrane-spanning segment. Residues 468-476 (RCIKPQLKS) lie on the Cytoplasmic side of the membrane. A helical transmembrane segment spans residues 477–502 (FALGIYTLSIRVLAGIPAPVYFGVLI). At 503–536 (DTSCLKWGFKRCGSRGSCRLYDSNVFRHIYLGLT) the chain is on the extracellular side. Residues 537–554 (VILGTVSIFLSIAVLFIL) form a helical membrane-spanning segment. At 555–602 (KKNYVSKHRNFITKRERTMVSTRFQKENCTTSDHLLQPKYWPGKETQL) the chain is on the cytoplasmic side.

It belongs to the organo anion transporter (TC 2.A.60) family.

It is found in the cell membrane. The catalysed reaction is 3,3',5'-triiodo-L-thyronine(out) = 3,3',5'-triiodo-L-thyronine(in). The enzyme catalyses L-thyroxine(out) = L-thyroxine(in). It catalyses the reaction L-thyroxine sulfate(out) = L-thyroxine sulfate(in). Its function is as follows. Mediates the Na(+)-independent high affinity transport of organic anions such as the thyroid hormones L-thyroxine (T4), L-thyroxine sulfate (T4S), and 3,3',5'-triiodo-L-thyronine (reverse T3, rT3) at the plasma membrane. Regulates T4 levels in different brain regions by transporting T4, and also by serving as an export pump for T4S, which is a source of T4 after hydrolysis by local sulfatases. Increases the access of these substrates to the intracellular sites where they are metabolized by the deiodinases. Other potential substrates, such as triiodothyronine (T3), 17-beta-glucuronosyl estradiol (17beta-estradiol 17-O-(beta-D-glucuronate)), estrone-3-sulfate (E1S) and sulfobromophthalein (BSP) are transported with much lower efficiency. Transports T4 and E1S in a pH-insensitive manner. Facilitates the transport of thyroid hormones across the blood-brain barrier and into glia and neuronal cells in the brain. This chain is Solute carrier organic anion transporter family member 1C1 (SLCO1C1), found in Macaca fascicularis (Crab-eating macaque).